We begin with the raw amino-acid sequence, 275 residues long: Release factor glutamine methyltransferase (275 aa).

S-adenosyl-L-methionine-binding positions include 114 to 118, D137, W165, and N180; that span reads GTGSG. 180-183 is a substrate binding site; sequence NPPY.

Belongs to the protein N5-glutamine methyltransferase family. PrmC subfamily.

It carries out the reaction L-glutaminyl-[peptide chain release factor] + S-adenosyl-L-methionine = N(5)-methyl-L-glutaminyl-[peptide chain release factor] + S-adenosyl-L-homocysteine + H(+). In terms of biological role, methylates the class 1 translation termination release factors RF1/PrfA and RF2/PrfB on the glutamine residue of the universally conserved GGQ motif. In Xylella fastidiosa (strain Temecula1 / ATCC 700964), this protein is Release factor glutamine methyltransferase.